We begin with the raw amino-acid sequence, 229 residues long: 2-C-methyl-D-erythritol 4-phosphate cytidylyltransferase (229 aa).

Belongs to the IspD/TarI cytidylyltransferase family. IspD subfamily.

It catalyses the reaction 2-C-methyl-D-erythritol 4-phosphate + CTP + H(+) = 4-CDP-2-C-methyl-D-erythritol + diphosphate. It participates in isoprenoid biosynthesis; isopentenyl diphosphate biosynthesis via DXP pathway; isopentenyl diphosphate from 1-deoxy-D-xylulose 5-phosphate: step 2/6. Catalyzes the formation of 4-diphosphocytidyl-2-C-methyl-D-erythritol from CTP and 2-C-methyl-D-erythritol 4-phosphate (MEP). The chain is 2-C-methyl-D-erythritol 4-phosphate cytidylyltransferase from Clostridium botulinum (strain 657 / Type Ba4).